The chain runs to 231 residues: Probable septum site-determining protein MinC (231 aa).

It belongs to the MinC family. As to quaternary structure, interacts with MinD and FtsZ.

In terms of biological role, cell division inhibitor that blocks the formation of polar Z ring septums. Rapidly oscillates between the poles of the cell to destabilize FtsZ filaments that have formed before they mature into polar Z rings. Prevents FtsZ polymerization. The polypeptide is Probable septum site-determining protein MinC (Baumannia cicadellinicola subsp. Homalodisca coagulata).